The following is a 263-amino-acid chain: N-acyl homoserine lactonase AttM (263 aa).

7 residues coordinate Zn(2+): histidine 103, histidine 105, aspartate 107, histidine 108, histidine 180, aspartate 202, and histidine 247.

Belongs to the metallo-beta-lactamase superfamily. Requires Zn(2+) as cofactor.

It catalyses the reaction an N-acyl-L-homoserine lactone + H2O = an N-acyl-L-homoserine + H(+). This chain is N-acyl homoserine lactonase AttM, found in Rhizobium johnstonii (strain DSM 114642 / LMG 32736 / 3841) (Rhizobium leguminosarum bv. viciae).